The chain runs to 506 residues: Asparagine--tRNA ligase (506 aa).

Belongs to the class-II aminoacyl-tRNA synthetase family. In terms of assembly, homodimer.

Its subcellular location is the cytoplasm. The enzyme catalyses tRNA(Asn) + L-asparagine + ATP = L-asparaginyl-tRNA(Asn) + AMP + diphosphate + H(+). The sequence is that of Asparagine--tRNA ligase from Onion yellows phytoplasma (strain OY-M).